The following is a 304-amino-acid chain: N-acetylmuramic acid 6-phosphate etherase (304 aa).

Positions 58–221 (IVDRMKQGGR…TTASMVKMGK (164 aa)) constitute an SIS domain. The active-site Proton donor is glutamate 86. Glutamate 117 is an active-site residue.

This sequence belongs to the GCKR-like family. MurNAc-6-P etherase subfamily. Homodimer.

The enzyme catalyses N-acetyl-D-muramate 6-phosphate + H2O = N-acetyl-D-glucosamine 6-phosphate + (R)-lactate. The protein operates within amino-sugar metabolism; N-acetylmuramate degradation. Specifically catalyzes the cleavage of the D-lactyl ether substituent of MurNAc 6-phosphate, producing GlcNAc 6-phosphate and D-lactate. In Clostridioides difficile (strain 630) (Peptoclostridium difficile), this protein is N-acetylmuramic acid 6-phosphate etherase.